Reading from the N-terminus, the 73-residue chain is MKFTVYVKPNSKKVFFRKEEDGVLTIAVREPALEGKANEAVIESISKEMKVPKSKIRILSGQKNKKKIIEIDL.

It belongs to the UPF0235 family.

The polypeptide is UPF0235 protein LA_1736 (Leptospira interrogans serogroup Icterohaemorrhagiae serovar Lai (strain 56601)).